Consider the following 85-residue polypeptide: Protein AC4 (85 aa).

The N-myristoyl glycine; by host moiety is linked to residue glycine 2. Positions 44 to 63 are disordered; the sequence is RAPMSNPTSRKTGTVSNGDC. Over residues 46–62 the composition is skewed to polar residues; that stretch reads PMSNPTSRKTGTVSNGD.

The protein belongs to the geminiviridae protein AC4/C4 family.

Its subcellular location is the host cell membrane. Pathogenicity determinant. May act as a suppressor of RNA-mediated gene silencing, also known as post-transcriptional gene silencing (PTGS), a mechanism of plant viral defense that limits the accumulation of viral RNAs. In Potato yellow mosaic virus (isolate Venezuela) (PYMV), this protein is Protein AC4.